Here is a 524-residue protein sequence, read N- to C-terminus: Phytoene desaturase (neurosporene-forming) (524 aa).

12–45 (VVIGAGLGGLAAAMRLGAKGYKVTVVDRLDRPGG) provides a ligand contact to FAD. The interval 500–524 (PDAPKPETPAAAAPKARTPRAKAAQ) is disordered. Residues 507–524 (TPAAAAPKARTPRAKAAQ) show a composition bias toward low complexity.

This sequence belongs to the carotenoid/retinoid oxidoreductase family. It depends on FAD as a cofactor.

It carries out the reaction 15-cis-phytoene + 3 A = all-trans-neurosporene + 3 AH2. It participates in carotenoid biosynthesis. With respect to regulation, is inhibited by diphenylamine (DPA). Is also slightly inhibited by NAD, NADP or ATP in the presence of FAD. Converts phytoene into all-trans-neurosporene as the major product, via the intermediary of phytofluene and zeta-carotene, by the introduction of three double bonds. Both intermediates, phytofluene and zeta-carotene, can be used as substrates and converted to neurosporene. 1,2-epoxy phytoene is also a suitable substrate whereas the C30 diapophytoene is not. The protein is Phytoene desaturase (neurosporene-forming) (crtI) of Rhodobacter capsulatus (strain ATCC BAA-309 / NBRC 16581 / SB1003).